The sequence spans 442 residues: MTTSQQPPERVVVVGGQDWDQVVAAARQNAAEHAGERIVVNMGPQHPSTHGVLRLILEIEGEIIVEARCGIGYLHTGIEKNLEFRNWTQGVTFVTRMDYLSPFFNETAYCLGVEKLLGITDAIPERASVIRVMMMELNRISSHLVALATGGMELGAMTAMFLGFRERELILSVFETITGLRMNNAYIRPGGVAADLPDEALPQVRDLLTLLPKRLRDMEDLLNENYIWKARTQGIGYLDLTGCMALGITGPVLRSTGLPHDLRKAQPYCGYETYDFDVVTDDQCDSYGRYLIRVKEMHQSIRIVEQCVQRLERSVGAPVMITDKKLAWPADLKVGPDGLGNSPEHIAKIMGHSMEGLIHHFKLVTEGIRVPAGQVYVAVESPRGELGVHMVSDGGTRPYRVHYRDPSFTNLQAVAAMCEGGMVADAITAVASIDPVMGGVDR.

Belongs to the complex I 49 kDa subunit family. NDH-1 is composed of 14 different subunits. Subunits NuoB, C, D, E, F, and G constitute the peripheral sector of the complex.

It localises to the cell membrane. It catalyses the reaction a quinone + NADH + 5 H(+)(in) = a quinol + NAD(+) + 4 H(+)(out). Functionally, NDH-1 shuttles electrons from NADH, via FMN and iron-sulfur (Fe-S) centers, to quinones in the respiratory chain. The immediate electron acceptor for the enzyme in this species is believed to be a menaquinone. Couples the redox reaction to proton translocation (for every two electrons transferred, four hydrogen ions are translocated across the cytoplasmic membrane), and thus conserves the redox energy in a proton gradient. The sequence is that of NADH-quinone oxidoreductase subunit D from Mycolicibacterium vanbaalenii (strain DSM 7251 / JCM 13017 / BCRC 16820 / KCTC 9966 / NRRL B-24157 / PYR-1) (Mycobacterium vanbaalenii).